A 377-amino-acid chain; its full sequence is Mechanosensory abnormality protein 6 (377 aa).

Residues 1–13 (MGLQSAAAHFINR) lie on the Cytoplasmic side of the membrane. Residues 14-34 (FIIWITIFMVACFLLRLLVVL) form a helical membrane-spanning segment. Residues 35-377 (DLNKRVYNHT…HCDLTHSYIT (343 aa)) lie on the Extracellular side of the membrane. The cysteines at positions 48 and 369 are disulfide-linked. The N-linked (GlcNAc...) asparagine glycan is linked to Asn-94.

Belongs to the paraoxonase family. Component of a non-voltage-gated amiloride-sensitive cation channel complex (also called the degenerin channel complex) composed of at least the mec-2, mec-4, mec-6 and mec-10 subunits; the complex mediates mechanotransduction in touch cells. Interacts with mec-2, mec-4 and mec-10. In terms of processing, glycosylated. As to expression, expressed in neurons including the six touch receptors, ventral cord motor neurons, HSN, PVD, PVC, IL1, and several neurons near the nerve ring, in the anal ganglion and in the male tail sensory rays, in muscles including the body wall, vulval, intestinal, anal depressor and sphincter muscles, and in the excretory canal.

It is found in the cell membrane. The protein resides in the cell projection. It localises to the axon. Subunit of an amiloride-sensitive cation channel (degenerin channel complex) permeable for sodium, potassium, lithium and N-methylglucamine, and required for mechanosensory transduction (touch sensitivity). Interacts with degenerin channel proteins and stabilizes the channel. Plays a role in mechanosensory transduction (touch sensitivity). This Caenorhabditis elegans protein is Mechanosensory abnormality protein 6.